A 420-amino-acid chain; its full sequence is Glycerol-3-phosphate dehydrogenase [NAD(+)] 2, chloroplastic (420 aa).

The transit peptide at 1–45 directs the protein to the chloroplast; the sequence is MAASVQPACLDLHFSGKHPPLLKHNAIIVRCVSSPNVIPEADSIS. NAD(+)-binding positions include 94–99, Phe171, Lys194, and Ala228; that span reads GGGSFG. Residue Lys194 participates in substrate binding. Lys279 (proton acceptor) is an active-site residue. NAD(+) contacts are provided by Arg343 and Glu369. 343–344 contributes to the substrate binding site; that stretch reads RN.

It belongs to the NAD-dependent glycerol-3-phosphate dehydrogenase family.

Its subcellular location is the plastid. It localises to the chloroplast. The catalysed reaction is sn-glycerol 3-phosphate + NAD(+) = dihydroxyacetone phosphate + NADH + H(+). It participates in membrane lipid metabolism; glycerophospholipid metabolism. Functionally, required to supply glycerol-3-phosphate in the chloroplast for the synthesis of glycerolipids. Required for activation of systemic acquired resistance (SAR). Provision of glycerol-3-phosphate may be involved in generating lipid signals necessary for mediating defense responses and SAR. The protein is Glycerol-3-phosphate dehydrogenase [NAD(+)] 2, chloroplastic (GLY1) of Arabidopsis thaliana (Mouse-ear cress).